The sequence spans 434 residues: Serine hydroxymethyltransferase (434 aa).

Residues Leu133 and 137 to 139 contribute to the (6S)-5,6,7,8-tetrahydrofolate site; that span reads GHL. Lys242 bears the N6-(pyridoxal phosphate)lysine mark. 366 to 368 is a binding site for (6S)-5,6,7,8-tetrahydrofolate; the sequence is SPF.

It belongs to the SHMT family. In terms of assembly, homodimer. It depends on pyridoxal 5'-phosphate as a cofactor.

Its subcellular location is the cytoplasm. It catalyses the reaction (6R)-5,10-methylene-5,6,7,8-tetrahydrofolate + glycine + H2O = (6S)-5,6,7,8-tetrahydrofolate + L-serine. The protein operates within one-carbon metabolism; tetrahydrofolate interconversion. It participates in amino-acid biosynthesis; glycine biosynthesis; glycine from L-serine: step 1/1. Its function is as follows. Catalyzes the reversible interconversion of serine and glycine with tetrahydrofolate (THF) serving as the one-carbon carrier. This reaction serves as the major source of one-carbon groups required for the biosynthesis of purines, thymidylate, methionine, and other important biomolecules. Also exhibits THF-independent aldolase activity toward beta-hydroxyamino acids, producing glycine and aldehydes, via a retro-aldol mechanism. The chain is Serine hydroxymethyltransferase from Erythrobacter litoralis (strain HTCC2594).